We begin with the raw amino-acid sequence, 514 residues long: Double-stranded RNA-binding protein 6 (514 aa).

DRBM domains follow at residues 1–70 (MYKN…ALAR) and 87–155 (VYKN…SLRQ). 2 disordered regions span residues 195-268 (NNPH…SRFP) and 455-496 (EASQ…KDDH). 3 stretches are compositionally biased toward polar residues: residues 216–225 (FPQSSHSSYS), 249–263 (AASQ…SPNP), and 473–484 (SPDSLPKTQLKT).

Binds double-stranded RNA. The polypeptide is Double-stranded RNA-binding protein 6 (DRB6) (Oryza sativa subsp. japonica (Rice)).